Here is a 181-residue protein sequence, read N- to C-terminus: Histone deacetylase complex subunit SAP30L-A (181 aa).

Intrachain disulfides connect Cys-26–Cys-27 and Cys-35–Cys-71. The Atypical zinc finger occupies 26 to 74 (CCLIDGGERCPRPAGNASFSKRVQKSISQKKLKLDIDKNVRHLYICDFH). The segment at 82-103 (RNKRKRKTSDDGGDSPEHETDI) is disordered. The Nuclear localization signal (NLS) signature appears at 83–88 (NKRKRK). Positions 85 to 87 (RKR) are important for DNA and phosphoinositide binding.

The protein belongs to the SAP30 family. In terms of assembly, interacts with components of the histone deacetylase complex sin3a, hdac1 and hdac2. Binds histones and nucleosomes.

It is found in the nucleus. The protein localises to the nucleolus. Its function is as follows. Functions as a transcription repressor, probably via its interaction with histone deacetylase complexes. Involved in the functional recruitment of the class 1 Sin3-histone deacetylase complex (HDAC) to the nucleolus. Binds DNA, apparently without sequence-specificity, and bends bound double-stranded DNA. Binds phosphoinositol phosphates (phosphoinositol 3-phosphate, phosphoinositol 4-phosphate and phosphoinositol 5-phosphate) via the same basic sequence motif that mediates DNA binding and nuclear import. The protein is Histone deacetylase complex subunit SAP30L-A (sap30l-a) of Xenopus laevis (African clawed frog).